Here is an 89-residue protein sequence, read N- to C-terminus: Small ribosomal subunit protein uS15 (89 aa).

This sequence belongs to the universal ribosomal protein uS15 family. In terms of assembly, part of the 30S ribosomal subunit. Forms a bridge to the 50S subunit in the 70S ribosome, contacting the 23S rRNA.

In terms of biological role, one of the primary rRNA binding proteins, it binds directly to 16S rRNA where it helps nucleate assembly of the platform of the 30S subunit by binding and bridging several RNA helices of the 16S rRNA. Functionally, forms an intersubunit bridge (bridge B4) with the 23S rRNA of the 50S subunit in the ribosome. This is Small ribosomal subunit protein uS15 from Azotobacter vinelandii (strain DJ / ATCC BAA-1303).